Consider the following 80-residue polypeptide: MSEPADIAAMTFEQALAELEQIVARLESGQAPLEDSIRMYERGAALKAHCETRLEAARLRVEKIVMGAGGAPASEPAEFG.

It belongs to the XseB family. Heterooligomer composed of large and small subunits.

The protein localises to the cytoplasm. The enzyme catalyses Exonucleolytic cleavage in either 5'- to 3'- or 3'- to 5'-direction to yield nucleoside 5'-phosphates.. In terms of biological role, bidirectionally degrades single-stranded DNA into large acid-insoluble oligonucleotides, which are then degraded further into small acid-soluble oligonucleotides. This is Exodeoxyribonuclease 7 small subunit from Phenylobacterium zucineum (strain HLK1).